The chain runs to 119 residues: Phosphoribosyl-AMP cyclohydrolase (119 aa).

Residue Asp77 participates in Mg(2+) binding. Cys78 is a Zn(2+) binding site. Asp79 and Asp81 together coordinate Mg(2+). Zn(2+) is bound by residues Cys94 and Cys101.

The protein belongs to the PRA-CH family. Homodimer. Mg(2+) is required as a cofactor. It depends on Zn(2+) as a cofactor.

The protein localises to the cytoplasm. The enzyme catalyses 1-(5-phospho-beta-D-ribosyl)-5'-AMP + H2O = 1-(5-phospho-beta-D-ribosyl)-5-[(5-phospho-beta-D-ribosylamino)methylideneamino]imidazole-4-carboxamide. Its pathway is amino-acid biosynthesis; L-histidine biosynthesis; L-histidine from 5-phospho-alpha-D-ribose 1-diphosphate: step 3/9. Functionally, catalyzes the hydrolysis of the adenine ring of phosphoribosyl-AMP. The polypeptide is Phosphoribosyl-AMP cyclohydrolase (Cereibacter sphaeroides (strain KD131 / KCTC 12085) (Rhodobacter sphaeroides)).